The primary structure comprises 330 residues: Ribosomal RNA small subunit methyltransferase C (330 aa).

This sequence belongs to the methyltransferase superfamily. RsmC family. As to quaternary structure, monomer.

It is found in the cytoplasm. The catalysed reaction is guanosine(1207) in 16S rRNA + S-adenosyl-L-methionine = N(2)-methylguanosine(1207) in 16S rRNA + S-adenosyl-L-homocysteine + H(+). In terms of biological role, specifically methylates the guanine in position 1207 of 16S rRNA in the 30S particle. This is Ribosomal RNA small subunit methyltransferase C from Haemophilus influenzae (strain ATCC 51907 / DSM 11121 / KW20 / Rd).